The chain runs to 376 residues: DNA replication and repair protein RecF (376 aa).

30 to 37 (GNNAQGKS) serves as a coordination point for ATP.

It belongs to the RecF family.

The protein localises to the cytoplasm. In terms of biological role, the RecF protein is involved in DNA metabolism; it is required for DNA replication and normal SOS inducibility. RecF binds preferentially to single-stranded, linear DNA. It also seems to bind ATP. The chain is DNA replication and repair protein RecF from Trichormus variabilis (strain ATCC 29413 / PCC 7937) (Anabaena variabilis).